A 114-amino-acid polypeptide reads, in one-letter code: Neurotrophic factor BDNF precursor form (114 aa).

3 cysteine pairs are disulfide-bonded: C14–C81, C59–C110, and C69–C112.

It belongs to the NGF-beta family.

Its subcellular location is the secreted. Promotes the survival of neuronal populations that are all located either in the central nervous system or directly connected to it. This Xenopus laevis (African clawed frog) protein is Neurotrophic factor BDNF precursor form (bdnf).